The following is a 122-amino-acid chain: Small ribosomal subunit protein uS13 (122 aa).

The tract at residues 94–122 is disordered; that stretch reads RGLPVRGQRTKTNARQRKGPRPAIGGRKK.

This sequence belongs to the universal ribosomal protein uS13 family. In terms of assembly, part of the 30S ribosomal subunit. Forms a loose heterodimer with protein S19. Forms two bridges to the 50S subunit in the 70S ribosome.

Located at the top of the head of the 30S subunit, it contacts several helices of the 16S rRNA. In the 70S ribosome it contacts the 23S rRNA (bridge B1a) and protein L5 of the 50S subunit (bridge B1b), connecting the 2 subunits; these bridges are implicated in subunit movement. Contacts the tRNAs in the A and P-sites. This Rubrobacter xylanophilus (strain DSM 9941 / JCM 11954 / NBRC 16129 / PRD-1) protein is Small ribosomal subunit protein uS13.